The following is a 411-amino-acid chain: ATPase GET3B (411 aa).

The N-terminal 67 residues, 1–67, are a transit peptide targeting the chloroplast; sequence MATLSSYLLS…RRRNSLQVKS (67 aa). 95-102 contacts ATP; that stretch reads KGGVGKTS. The active site involves D124. N348 is a binding site for ATP.

The protein belongs to the arsA ATPase family.

It is found in the plastid. It localises to the chloroplast stroma. The enzyme catalyses ATP + H2O = ADP + phosphate + H(+). The protein is ATPase GET3B of Arabidopsis thaliana (Mouse-ear cress).